The following is a 132-amino-acid chain: Large ribosomal subunit protein uL14 (132 aa).

Belongs to the universal ribosomal protein uL14 family. Part of the 50S ribosomal subunit. Forms a cluster with proteins L3 and L24e, part of which may contact the 16S rRNA in 2 intersubunit bridges.

Its function is as follows. Binds to 23S rRNA. Forms part of two intersubunit bridges in the 70S ribosome. In Methanococcus maripaludis (strain C7 / ATCC BAA-1331), this protein is Large ribosomal subunit protein uL14.